Reading from the N-terminus, the 373-residue chain is LIM domain-binding protein 2 (373 aa).

2 disordered regions span residues A244–S291 and Q327–Q373. The span at S263–G280 shows a compositional bias: low complexity. One can recognise an LIM interaction domain (LID) domain in the interval D298–E337. Positions N341–E361 are enriched in polar residues.

Belongs to the LDB family. Interacts with LHX9. Interacts with SLK; leading to negatively regulate SLK kinase activity. Interacts with LMO4. Post-translationally, ubiquitinated by RLIM/RNF12, leading to its degradation by the proteasome.

It is found in the nucleus. In terms of biological role, transcription cofactor. Binds to the LIM domain of a wide variety of LIM domain-containing transcription factors. In Homo sapiens (Human), this protein is LIM domain-binding protein 2 (LDB2).